Reading from the N-terminus, the 274-residue chain is Octanoyltransferase LipM (274 aa).

The 215-residue stretch at 31–245 (GEVPPTLRLY…GFAEALGARL (215 aa)) folds into the BPL/LPL catalytic domain. Cys-147 acts as the Acyl-thioester intermediate in catalysis.

This sequence belongs to the octanoyltransferase LipM family. In terms of assembly, monomer.

It carries out the reaction octanoyl-[ACP] + L-lysyl-[protein] = N(6)-octanoyl-L-lysyl-[protein] + holo-[ACP] + H(+). The protein operates within protein modification; protein lipoylation via endogenous pathway; protein N(6)-(lipoyl)lysine from octanoyl-[acyl-carrier-protein]. In terms of biological role, catalyzes the transfer of endogenously produced octanoic acid from octanoyl-acyl-carrier-protein onto the lipoyl domain of GcvH, an intermediate carrier during protein lipoylation. This is Octanoyltransferase LipM from Kyrpidia tusciae (strain DSM 2912 / NBRC 15312 / T2) (Bacillus tusciae).